Here is a 397-residue protein sequence, read N- to C-terminus: Riboflavin biosynthesis protein RibBA (397 aa).

The segment at 1 to 199 (MFHRIEEALE…IEDLIAYRRH (199 aa)) is DHBP synthase. D-ribulose 5-phosphate-binding positions include 26-27 (RE), Asp31, 138-142 (RAGHT), and Glu162. Glu27 serves as a coordination point for Mg(2+). Position 141 (His141) interacts with Mg(2+). The tract at residues 200-397 (HETFVTKEVE…VTKLGHLLNL (198 aa)) is GTP cyclohydrolase II. GTP is bound at residue 250–254 (RVHSE). The Zn(2+) site is built by Cys255, Cys266, and Cys268. GTP contacts are provided by residues Gln271, 293-295 (EGR), and Thr315. The active-site Proton acceptor; for GTP cyclohydrolase activity is the Asp327. Arg329 functions as the Nucleophile; for GTP cyclohydrolase activity in the catalytic mechanism. Thr350 and Lys355 together coordinate GTP.

The protein in the N-terminal section; belongs to the DHBP synthase family. This sequence in the C-terminal section; belongs to the GTP cyclohydrolase II family. It depends on Mg(2+) as a cofactor. Requires Mn(2+) as cofactor. Zn(2+) serves as cofactor.

It catalyses the reaction D-ribulose 5-phosphate = (2S)-2-hydroxy-3-oxobutyl phosphate + formate + H(+). The catalysed reaction is GTP + 4 H2O = 2,5-diamino-6-hydroxy-4-(5-phosphoribosylamino)-pyrimidine + formate + 2 phosphate + 3 H(+). It participates in cofactor biosynthesis; riboflavin biosynthesis; 2-hydroxy-3-oxobutyl phosphate from D-ribulose 5-phosphate: step 1/1. It functions in the pathway cofactor biosynthesis; riboflavin biosynthesis; 5-amino-6-(D-ribitylamino)uracil from GTP: step 1/4. In terms of biological role, catalyzes the conversion of D-ribulose 5-phosphate to formate and 3,4-dihydroxy-2-butanone 4-phosphate. Its function is as follows. Catalyzes the conversion of GTP to 2,5-diamino-6-ribosylamino-4(3H)-pyrimidinone 5'-phosphate (DARP), formate and pyrophosphate. This Bacillus cytotoxicus (strain DSM 22905 / CIP 110041 / 391-98 / NVH 391-98) protein is Riboflavin biosynthesis protein RibBA.